A 250-amino-acid polypeptide reads, in one-letter code: Peptidyl-tRNA hydrolase (250 aa).

Tyrosine 14 lines the tRNA pocket. Histidine 19 serves as the catalytic Proton acceptor. TRNA-binding residues include phenylalanine 64, asparagine 66, and asparagine 112. The tract at residues methionine 192 to aspartate 250 is disordered. The segment covering histidine 219–lysine 229 has biased composition (polar residues). The segment covering methionine 241 to aspartate 250 has biased composition (basic and acidic residues).

This sequence belongs to the PTH family. In terms of assembly, monomer.

The protein resides in the cytoplasm. The enzyme catalyses an N-acyl-L-alpha-aminoacyl-tRNA + H2O = an N-acyl-L-amino acid + a tRNA + H(+). Its function is as follows. Hydrolyzes ribosome-free peptidyl-tRNAs (with 1 or more amino acids incorporated), which drop off the ribosome during protein synthesis, or as a result of ribosome stalling. In terms of biological role, catalyzes the release of premature peptidyl moieties from peptidyl-tRNA molecules trapped in stalled 50S ribosomal subunits, and thus maintains levels of free tRNAs and 50S ribosomes. The protein is Peptidyl-tRNA hydrolase of Brucella abortus (strain 2308).